We begin with the raw amino-acid sequence, 270 residues long: MKCFLVSRIDMPGALDCASRMKTALERAGHTVVLDPDTASMLGGSGHSINKVSADMAVVIGGDGTILRTVQQLHEQIPIIGINHGEVGFLADLEPEEAGAFVRSLAPGFDVEERMRLSLWNEEDHLGDALNEGLIVTTRPAKMLRFSILVDGRLTEQFRSDGILVSTPTGSTAYAMSAGGPIVDPRIEGFLLVPLAPYLLSSRPHLISSSRRLEIRLESSKPAKLVIDGQNTVELGSAVSLVIQKAASPARFIDVHRNFFEKVDRKLRKL.

Aspartate 63 acts as the Proton acceptor in catalysis. Residues 63–64, arginine 68, 131–132, lysine 142, arginine 159, aspartate 161, 172–177, alanine 196, and glutamine 230 each bind NAD(+); these read DG, NE, and TAYAMS.

This sequence belongs to the NAD kinase family. It depends on a divalent metal cation as a cofactor.

It localises to the cytoplasm. It catalyses the reaction NAD(+) + ATP = ADP + NADP(+) + H(+). Its function is as follows. Involved in the regulation of the intracellular balance of NAD and NADP, and is a key enzyme in the biosynthesis of NADP. Catalyzes specifically the phosphorylation on 2'-hydroxyl of the adenosine moiety of NAD to yield NADP. The polypeptide is NAD kinase (Methanoregula boonei (strain DSM 21154 / JCM 14090 / 6A8)).